The following is a 209-amino-acid chain: dITP/XTP pyrophosphatase (209 aa).

22–27 is a substrate binding site; it reads SHNQGK. Aspartate 83 (proton acceptor) is an active-site residue. Aspartate 83 serves as a coordination point for Mg(2+). Substrate contacts are provided by residues serine 84, 167 to 170, lysine 190, and 195 to 196; these read FGYD and HR.

This sequence belongs to the HAM1 NTPase family. As to quaternary structure, homodimer. It depends on Mg(2+) as a cofactor.

The enzyme catalyses XTP + H2O = XMP + diphosphate + H(+). It catalyses the reaction dITP + H2O = dIMP + diphosphate + H(+). It carries out the reaction ITP + H2O = IMP + diphosphate + H(+). Its function is as follows. Pyrophosphatase that catalyzes the hydrolysis of nucleoside triphosphates to their monophosphate derivatives, with a high preference for the non-canonical purine nucleotides XTP (xanthosine triphosphate), dITP (deoxyinosine triphosphate) and ITP. Seems to function as a house-cleaning enzyme that removes non-canonical purine nucleotides from the nucleotide pool, thus preventing their incorporation into DNA/RNA and avoiding chromosomal lesions. This Zymomonas mobilis subsp. mobilis (strain ATCC 31821 / ZM4 / CP4) protein is dITP/XTP pyrophosphatase.